A 752-amino-acid chain; its full sequence is MAP/microtubule affinity-regulating kinase 4 (752 aa).

The disordered stretch occupies residues 1 to 36 (MSSRTALAPGNDRNSDTHGTLGSGRSSDKGPSWSSR). A Protein kinase domain is found at 59–310 (YRLLRTIGKG…LEQIMKDKWI (252 aa)). ATP is bound by residues 65 to 73 (IGKGNFAKV) and Lys-88. The active-site Proton acceptor is Asp-181. Thr-214 bears the Phosphothreonine; by LKB1 mark. The region spanning 324-368 (EPEEDFGDTKRIEVMVGMGYTREEIKEALTNQKYNEVTATYLLLG) is the UBA domain. The disordered stretch occupies residues 385-615 (ARVRAPSDTT…SGRPRPTTNL (231 aa)). Positions 391-406 (SDTTNGTSSSKGSSHN) are enriched in low complexity. 2 positions are modified to phosphoserine: Ser-423 and Ser-543. The segment covering 544 to 553 (PSSHSLAPPS) has biased composition (low complexity). A KA1 domain is found at 703–752 (AGGPEPLSHFEVEVCQLPRPGLRGVLFRRVAGTALAFRTLVTRISNDLEL).

This sequence belongs to the protein kinase superfamily. CAMK Ser/Thr protein kinase family. SNF1 subfamily. Interacts with MAPT/TAU. Interacts with gamma-tubulin. Interacts with ODF2. Interacts with USP9X. Interacts with YWHAQ. Interacts with NLRP3; promoting NLRP3 recruitment to microtubule organizing center (MTOC). The cofactor is Mg(2+). Post-translationally, ubiquitinated with 'Lys-29'- and 'Lys-33'-linked polyubiquitins which appear to impede LKB1-mediated phosphorylation. Deubiquitinated by USP9X. In terms of processing, phosphorylated at Thr-214 by STK11/LKB1 in complex with STE20-related adapter-alpha (STRADA) pseudo kinase and CAB39. Phosphorylated throughout the cell cycle. Isoform 1 and isoform 2 show similar expression patterns in the central nervous system and are present in the same subsets of neurons including pyramidal and non-pyramidal neurons in the cerebral cortex and hippocampus, cerebellar Purkinje cells, and interneurons and motor neurons in the spinal cord but not in glial cells (at protein level). Isoform 2 is the major isoform in brain and cerebellum. Also expressed in spleen, liver, small intestine, colon, kidney, tongue, testis and lung. Isoform 1 and isoform 2 are expressed at similar levels in heart.

Its subcellular location is the cytoplasm. The protein localises to the cytoskeleton. It is found in the microtubule organizing center. It localises to the centrosome. The protein resides in the cilium axoneme. Its subcellular location is the cilium basal body. The protein localises to the cell projection. It is found in the dendrite. The catalysed reaction is L-seryl-[protein] + ATP = O-phospho-L-seryl-[protein] + ADP + H(+). The enzyme catalyses L-threonyl-[protein] + ATP = O-phospho-L-threonyl-[protein] + ADP + H(+). Activated by phosphorylation on Thr-214. Functionally, serine/threonine-protein kinase. Phosphorylates the microtubule-associated protein MAPT/TAU. Also phosphorylates the microtubule-associated proteins MAP2 and MAP4. Involved in regulation of the microtubule network, causing reorganization of microtubules into bundles. Required for the initiation of axoneme extension during cilium assembly. Regulates the centrosomal location of ODF2 and phosphorylates ODF2 in vitro. Plays a role in cell cycle progression, specifically in the G1/S checkpoint. Reduces neuronal cell survival. Plays a role in energy homeostasis by regulating satiety and metabolic rate. Promotes adipogenesis by activating JNK1 and inhibiting the p38MAPK pathway, and triggers apoptosis by activating the JNK1 pathway. Phosphorylates mTORC1 complex member RPTOR and acts as a negative regulator of the mTORC1 complex, probably due to disruption of the interaction between phosphorylated RPTOR and the RRAGA/RRAGC heterodimer which is required for mTORC1 activation. Involved in NLRP3 positioning along microtubules by mediating NLRP3 recruitment to microtubule organizing center (MTOC) upon inflammasome activation. This Mus musculus (Mouse) protein is MAP/microtubule affinity-regulating kinase 4.